The following is a 348-amino-acid chain: Rhodopsin (348 aa).

Residues Thr1–Ala33 are Extracellular-facing. N-linked (GlcNAc...) asparagine glycosylation is present at Asn12. Residues Tyr34–Val58 form a helical membrane-spanning segment. At Thr59–Asn70 the chain is on the cytoplasmic side. A helical transmembrane segment spans residues Tyr71–Tyr93. At Thr94 to Cys107 the chain is on the extracellular side. Cysteines 107 and 184 form a disulfide. Residues Asn108–Ile130 form a helical membrane-spanning segment. Residues Glu131–Trp133 carry the 'Ionic lock' involved in activated form stabilization motif. At Glu131–His149 the chain is on the cytoplasmic side. A helical transmembrane segment spans residues Ala150–Val170. The Extracellular portion of the chain corresponds to Gly171–Ser199. A glycan (N-linked (GlcNAc...) asparagine) is linked at Asn197. A helical transmembrane segment spans residues Phe200 to Gly221. Residues Arg222–Arg249 lie on the Cytoplasmic side of the membrane. A helical transmembrane segment spans residues Met250–Phe271. The Extracellular segment spans residues Ile272 to Leu283. The chain crosses the membrane as a helical span at residues Phe284–Cys305. Lys293 carries the N6-(retinylidene)lysine modification. At Met306–Ala348 the chain is on the cytoplasmic side. Cys320 carries S-palmitoyl cysteine lipidation. The interval Gly327–Ala348 is disordered. Low complexity predominate over residues Ala332–Ala348.

This sequence belongs to the G-protein coupled receptor 1 family. Opsin subfamily. In terms of processing, phosphorylated on some or all of the serine and threonine residues present in the C-terminal region. Contains one covalently linked retinal chromophore.

It is found in the membrane. Its subcellular location is the cell projection. The protein localises to the cilium. It localises to the photoreceptor outer segment. Photoreceptor required for image-forming vision at low light intensity. While most salt water fish species use retinal as chromophore, most freshwater fish use 3-dehydroretinal, or a mixture of retinal and 3-dehydroretinal. Light-induced isomerization of 11-cis to all-trans retinal triggers a conformational change that activates signaling via G-proteins. Subsequent receptor phosphorylation mediates displacement of the bound G-protein alpha subunit by arrestin and terminates signaling. The polypeptide is Rhodopsin (rho) (Sargocentron microstoma (Smallmouth squirrelfish)).